The following is a 204-amino-acid chain: IMPACT family member YigZ (204 aa).

The protein belongs to the IMPACT family. Monomer.

This Escherichia coli (strain K12) protein is IMPACT family member YigZ (yigZ).